The sequence spans 266 residues: MDQGLSLNTLPLKELRNLIRNNQFTGSTTGCAAGYLQANLVILPAEWATDFLLFCQKNPVACPLIDVTQPGEKYLQSIGRDIDLSTDVPEYHVFYDGEFETAVSDLSTLWREDLVTFVLGCSFSFEEALIQSGLSIRNIDEGKNVSMYDTSIPCQSSGKFSGNYVVSMRPFTSIDAIRAIQITTRFPKAHGAPVHFGDPSLIGINDISTPNYGDAVEIKPNEVPVFWGCGVTPQNVIRQSRPPFCITHAPGKMLITDRLSSEFAVL.

It belongs to the D-glutamate cyclase family.

The chain is Putative hydro-lyase VF_1377 from Aliivibrio fischeri (strain ATCC 700601 / ES114) (Vibrio fischeri).